Consider the following 290-residue polypeptide: PIH1 domain-containing protein 1 (290 aa).

Phosphoserine is present on residues S12, S16, and S173.

This sequence belongs to the PIH1 family. Component of the R2TP complex composed at least of RUVBL1, RUVBL2, RPAP3 and PIHD1. Component of the PAQosome complex which is responsible for the biogenesis of several protein complexes and which consists of R2TP complex members RUVBL1, RUVBL2, RPAP3 and PIH1D1, URI complex members PFDN2, PFDN6, PDRG1, UXT and URI1 as well as ASDURF, POLR2E and DNAAF10/WDR92. Interacts with phosphorylated TELO2. Mediates interaction of TELO2 with the R2TP complex. Interacts with phosphorylated ECD, EFTUD2/SNRP116, RPB1 and UBR5 and with RPB1 in a phosphorylation-independent manner. Interacts with the core C/D box snoRNP particle components NOP58 and FBL and with RUVBL1/TIP49. Interacts with RPAP3 and DNAAF10. Interacts with histone H4 and with SWI/SNF complex member SMARCB1/SNF5. Interacts with the mTORC1 complex member RPTOR. Interacts with isoform 1 of MSL1.

It is found in the nucleus. In terms of biological role, involved in the assembly of C/D box small nucleolar ribonucleoprotein (snoRNP) particles. Recruits the SWI/SNF complex to the core promoter of rRNA genes and enhances pre-rRNA transcription. Mediates interaction of TELO2 with the R2TP complex which is necessary for the stability of MTOR and SMG1. Positively regulates the assembly and activity of the mTORC1 complex. The protein is PIH1 domain-containing protein 1 (Pih1d1) of Mus musculus (Mouse).